Reading from the N-terminus, the 241-residue chain is SURF1-like protein (241 aa).

A run of 2 helical transmembrane segments spans residues 5–25 and 199–219; these read LTVLITFIILVLLGFWQLNRL and LEYAFTWFGLAASLVVIYRIY.

It belongs to the SURF1 family.

It is found in the cell membrane. The protein is SURF1-like protein of Rickettsia bellii (strain RML369-C).